Consider the following 208-residue polypeptide: Protein-L-isoaspartate O-methyltransferase (208 aa).

Residue S59 is part of the active site.

The protein belongs to the methyltransferase superfamily. L-isoaspartyl/D-aspartyl protein methyltransferase family.

The protein resides in the cytoplasm. The catalysed reaction is [protein]-L-isoaspartate + S-adenosyl-L-methionine = [protein]-L-isoaspartate alpha-methyl ester + S-adenosyl-L-homocysteine. In terms of biological role, catalyzes the methyl esterification of L-isoaspartyl residues in peptides and proteins that result from spontaneous decomposition of normal L-aspartyl and L-asparaginyl residues. It plays a role in the repair and/or degradation of damaged proteins. The chain is Protein-L-isoaspartate O-methyltransferase from Escherichia coli (strain K12 / MC4100 / BW2952).